Here is a 317-residue protein sequence, read N- to C-terminus: MNRFGTRLVGATATPPPPPKARSNENLDKIDMSLDDIIKLNRKEGKKQNFPRLNRRLQQSGTRQFRMRVRWGIQQNSGFGKTSLSRRGRVLPGKRRPYGVITGLAARKATGIRKGISPMNRPPLSDKNIERYFPALKRKTSLLRQNEVQRKQVAVLKRPNQLNRKNNIPANFTRNGNKLSHQKDTRQATFLFRRGLKVQTQLNTEQLIDDVVAKRTRQWRTSTTNGGILTVSIDNPGAVQCPVTQKPRLTRTAVPSFLTKREQSDVKKVPKGVPLQFDINSVGKQTGMTLNERFGILKEQRANLTFSKGGSRFVTVG.

Methionine 1 carries the post-translational modification N-acetylmethionine. The interval 1–26 (MNRFGTRLVGATATPPPPPKARSNEN) is disordered. At threonine 14 the chain carries Phosphothreonine. Serine 23 bears the Phosphoserine mark. The UAP56-binding motif motif lies at 26-44 (NLDKIDMSLDDIIKLNRKE). A phosphoserine mark is found at serine 60 and serine 117. A Glycyl lysine isopeptide (Lys-Gly) (interchain with G-Cter in SUMO1) cross-link involves residue lysine 139. Lysine 260 is covalently cross-linked (Glycyl lysine isopeptide (Lys-Gly) (interchain with G-Cter in SUMO2)).

Belongs to the UIF family. In terms of assembly, interacts with DDX39B/UAP56 and NXF1; interaction with DDX39B/UAP56 and NXF1 are mutually exclusive. Interacts with SSRP1; required for its recruitment to mRNAs. Interacts with CHTOP.

The protein localises to the nucleus. It localises to the nucleoplasm. It is found in the nucleus speckle. Functionally, required for mRNA export from the nucleus to the cytoplasm. Acts as an adapter that uses the DDX39B/UAP56-NFX1 pathway to ensure efficient mRNA export and delivering to the nuclear pore. Associates with spliced and unspliced mRNAs simultaneously with ALYREF/THOC4. The polypeptide is UAP56-interacting factor (Fyttd1) (Mus musculus (Mouse)).